Reading from the N-terminus, the 459-residue chain is Chromosomal replication initiator protein DnaA (459 aa).

The segment at 1–73 (MEIPIESLWS…AHAVQDILGH (73 aa)) is domain I, interacts with DnaA modulators. Positions 73–117 (HPVGIYITVAQGDEVSHFSEREVSWESTNPSSIPESLPHHNHKTT) are domain II. A domain III, AAA+ region region spans residues 118-334 (ELNSKYVFSR…GALIRAVAYI (217 aa)). Glycine 162, glycine 164, lysine 165, and threonine 166 together coordinate ATP. A domain IV, binds dsDNA region spans residues 335-459 (SIWGLPMTVE…INMTSRSQKS (125 aa)).

The protein belongs to the DnaA family. In terms of assembly, oligomerizes as a right-handed, spiral filament on DNA at oriC.

It is found in the cytoplasm. In terms of biological role, plays an essential role in the initiation and regulation of chromosomal replication. ATP-DnaA binds to the origin of replication (oriC) to initiate formation of the DNA replication initiation complex once per cell cycle. Binds the DnaA box (a 9 base pair repeat at the origin) and separates the double-stranded (ds)DNA. Forms a right-handed helical filament on oriC DNA; dsDNA binds to the exterior of the filament while single-stranded (ss)DNA is stabiized in the filament's interior. The ATP-DnaA-oriC complex binds and stabilizes one strand of the AT-rich DNA unwinding element (DUE), permitting loading of DNA polymerase. After initiation quickly degrades to an ADP-DnaA complex that is not apt for DNA replication. Binds acidic phospholipids. The sequence is that of Chromosomal replication initiator protein DnaA from Nostoc punctiforme (strain ATCC 29133 / PCC 73102).